Consider the following 247-residue polypeptide: MLFCCIICSVLRKNSRAHDEIRPVKIIRGWNIYAEGSALIAFGNTRVLCNATFQRGVPPFLRGQRSGWITAEYAMLPRSGTERSDRESVKGKISGRSHEISRLIGRSMRAILDRYALEENTIILDCDVLQADGGTRTAAITGSYIALYDALVWAKNQKILSKHPLTDSVSAVSVGLVGDQIFLDLDYSEDSNAQADINLVFTGSGKLVEIQGTAEKSPFSYGQFEQMMELAKTGCQALKEIQAASLD.

Residues arginine 96 and 134–136 (GTR) contribute to the phosphate site.

This sequence belongs to the RNase PH family. As to quaternary structure, homohexameric ring arranged as a trimer of dimers.

The catalysed reaction is tRNA(n+1) + phosphate = tRNA(n) + a ribonucleoside 5'-diphosphate. In terms of biological role, phosphorolytic 3'-5' exoribonuclease that plays an important role in tRNA 3'-end maturation. Removes nucleotide residues following the 3'-CCA terminus of tRNAs; can also add nucleotides to the ends of RNA molecules by using nucleoside diphosphates as substrates, but this may not be physiologically important. Probably plays a role in initiation of 16S rRNA degradation (leading to ribosome degradation) during starvation. This is Ribonuclease PH from Tropheryma whipplei (strain TW08/27) (Whipple's bacillus).